The primary structure comprises 707 residues: Polyribonucleotide nucleotidyltransferase (707 aa).

Mg(2+) contacts are provided by aspartate 491 and aspartate 497. The region spanning 558–617 (PRIEKIKIHPDKIGLLIGPGGKTIKKISAESGAEITIEDDGTVMIYSSSADSLEAAREMI) is the KH domain. The region spanning 622 to 695 (GEVTVGGIYR…EKGRYKFSRK (74 aa)) is the S1 motif domain.

Belongs to the polyribonucleotide nucleotidyltransferase family. It depends on Mg(2+) as a cofactor.

The protein resides in the cytoplasm. It catalyses the reaction RNA(n+1) + phosphate = RNA(n) + a ribonucleoside 5'-diphosphate. Functionally, involved in mRNA degradation. Catalyzes the phosphorolysis of single-stranded polyribonucleotides processively in the 3'- to 5'-direction. The protein is Polyribonucleotide nucleotidyltransferase of Methylacidiphilum infernorum (isolate V4) (Methylokorus infernorum (strain V4)).